We begin with the raw amino-acid sequence, 236 residues long: Three prime repair exonuclease 2 (236 aa).

Residues Asp14 and Glu16 each contribute to the Mg(2+) site. Residues Glu16 to Ala17 and Tyr122 each bind substrate. His188 functions as the Proton donor/acceptor in the catalytic mechanism. Residue Asp193 participates in Mg(2+) binding. Asp193 is a substrate binding site.

Belongs to the exonuclease superfamily. TREX family. Homodimer. The cofactor is Mg(2+).

The protein resides in the nucleus. It carries out the reaction Exonucleolytic cleavage in the 3'- to 5'-direction to yield nucleoside 5'-phosphates.. Exonuclease with a preference for double-stranded DNA with mismatched 3' termini. May play a role in DNA repair. This is Three prime repair exonuclease 2 (Trex2) from Mus musculus (Mouse).